Reading from the N-terminus, the 342-residue chain is UDP-3-O-(3-hydroxymyristoyl)glucosamine N-acyltransferase (342 aa).

His-239 (proton acceptor) is an active-site residue.

It belongs to the transferase hexapeptide repeat family. LpxD subfamily. As to quaternary structure, homotrimer.

It carries out the reaction a UDP-3-O-[(3R)-3-hydroxyacyl]-alpha-D-glucosamine + a (3R)-hydroxyacyl-[ACP] = a UDP-2-N,3-O-bis[(3R)-3-hydroxyacyl]-alpha-D-glucosamine + holo-[ACP] + H(+). The enzyme catalyses UDP-3-O-[(3R)-3-hydroxytetradecanoyl]-alpha-D-glucosamine + (3R)-hydroxytetradecanoyl-[ACP] = UDP-2-N,3-O-bis[(3R)-3-hydroxytetradecanoyl]-alpha-D-glucosamine + holo-[ACP] + H(+). It functions in the pathway glycolipid biosynthesis; lipid IV(A) biosynthesis; lipid IV(A) from (3R)-3-hydroxytetradecanoyl-[acyl-carrier-protein] and UDP-N-acetyl-alpha-D-glucosamine: step 3/6. Its function is as follows. Catalyzes the N-acylation of UDP-3-O-(hydroxytetradecanoyl)glucosamine using 3-hydroxytetradecanoyl-ACP as the acyl donor. Is involved in the biosynthesis of lipid A, a phosphorylated glycolipid that anchors the lipopolysaccharide to the outer membrane of the cell. This is UDP-3-O-(3-hydroxymyristoyl)glucosamine N-acyltransferase from Photorhabdus laumondii subsp. laumondii (strain DSM 15139 / CIP 105565 / TT01) (Photorhabdus luminescens subsp. laumondii).